A 421-amino-acid polypeptide reads, in one-letter code: ATP-dependent RNA helicase RhlB (421 aa).

The short motif at 9 to 37 (QKFSDFALHPKVVEALEKKGFHNCTPIQA) is the Q motif element. One can recognise a Helicase ATP-binding domain in the interval 40–219 (LPLTLAGRDV…FEQMNNAEYI (180 aa)). 53–60 (AQTGTGKT) serves as a coordination point for ATP. Positions 165-168 (DEAD) match the DEAD box motif. The region spanning 245–390 (RLLQTLIEEE…VSKYNPDALM (146 aa)) is the Helicase C-terminal domain. The segment at 392-421 (DLPKPLRLTRPRTGNGPRRTGTPRNRRRSG) is disordered. The span at 402–414 (PRTGNGPRRTGTP) shows a compositional bias: low complexity.

The protein belongs to the DEAD box helicase family. RhlB subfamily. Component of the RNA degradosome, which is a multiprotein complex involved in RNA processing and mRNA degradation.

It localises to the cytoplasm. The catalysed reaction is ATP + H2O = ADP + phosphate + H(+). Functionally, DEAD-box RNA helicase involved in RNA degradation. Has RNA-dependent ATPase activity and unwinds double-stranded RNA. The sequence is that of ATP-dependent RNA helicase RhlB from Escherichia coli O17:K52:H18 (strain UMN026 / ExPEC).